The following is a 325-amino-acid chain: Melanocortin receptor 5 (325 aa).

The Extracellular segment spans residues 1 to 37; the sequence is MNSSFHLHFLDLGLNTTDGNLSGLSVQNASSLCEDMG. N-linked (GlcNAc...) asparagine glycans are attached at residues N2, N15, N20, and N28. Residues 38–61 traverse the membrane as a helical segment; sequence IAVEVFLALGLISLLENILVIGAI. The Cytoplasmic portion of the chain corresponds to 62 to 73; that stretch reads VRNRNLHTPMYF. A helical membrane pass occupies residues 74–97; sequence FVGSLAVADMLVSLSNSWETITIY. Topologically, residues 98-114 are extracellular; it reads LLTNKHLVMADASVRHL. A helical membrane pass occupies residues 115–138; sequence DNVFDSMICISVVASMCSLLAIAV. Residues 139–155 are Cytoplasmic-facing; that stretch reads DRYVTIFCALRYQRIMT. A helical membrane pass occupies residues 156-179; the sequence is GRRSGAIIGGIWAFCASCGTVFIV. The Extracellular portion of the chain corresponds to 180-186; the sequence is YYESTYV. The chain crosses the membrane as a helical span at residues 187–211; that stretch reads VICLIAMFLTMLLLMASLYTHMFLL. The Cytoplasmic portion of the chain corresponds to 212 to 239; it reads ARTHIRRIATLPGHSSVRQRTGVKGAIT. A helical membrane pass occupies residues 240–265; that stretch reads LAMLLGVFIVCWAPFFLHLILMISCP. Residues 266–273 lie on the Extracellular side of the membrane; that stretch reads HNLYCSCF. A helical membrane pass occupies residues 274–297; that stretch reads MSHFNMYLILIMCNSVIDPLIYAF. The Cytoplasmic portion of the chain corresponds to 298–325; sequence RSQEMRKTFKEIVCFQSFRTPCRFPSRY. C311 carries the S-palmitoyl cysteine lipid modification.

Belongs to the G-protein coupled receptor 1 family.

It is found in the cell membrane. Functionally, receptor for MSH (alpha, beta and gamma) and ACTH. The activity of this receptor is mediated by G proteins which activate adenylate cyclase. This receptor is a possible mediator of the immunomodulation properties of melanocortins. In Bos taurus (Bovine), this protein is Melanocortin receptor 5 (MC5R).